Here is a 410-residue protein sequence, read N- to C-terminus: O-methyltransferase afvC (410 aa).

S-adenosyl-L-methionine-binding positions include 253 to 254 (GG), Asp278, 299 to 300 (DF), and Arg315. His319 acts as the Proton acceptor in catalysis.

It belongs to the class I-like SAM-binding methyltransferase superfamily. Cation-independent O-methyltransferase family. COMT subfamily.

Its pathway is secondary metabolite biosynthesis. In terms of biological role, O-methyltransferase; part of the gene cluster that mediates the biosynthesis of aflavarin, a bicoumarin that exhibits anti-insectan activity against the fungivorous beetle C.hemipterus. The sequence is that of O-methyltransferase afvC from Aspergillus flavus (strain ATCC 200026 / FGSC A1120 / IAM 13836 / NRRL 3357 / JCM 12722 / SRRC 167).